A 117-amino-acid polypeptide reads, in one-letter code: MDKKASRIRRATRARRKIAELGATRLVVHRTPRHVYAQVIAANGSEVIAAASTVEKAIREQVKYTGNVDAAKAVGKAVAERALEKGVTAVAFDRSGFQYHGRVAALAESAREAGLKF.

It belongs to the universal ribosomal protein uL18 family. In terms of assembly, part of the 50S ribosomal subunit; part of the 5S rRNA/L5/L18/L25 subcomplex. Contacts the 5S and 23S rRNAs.

In terms of biological role, this is one of the proteins that bind and probably mediate the attachment of the 5S RNA into the large ribosomal subunit, where it forms part of the central protuberance. This Vibrio campbellii (strain ATCC BAA-1116) protein is Large ribosomal subunit protein uL18.